A 176-amino-acid polypeptide reads, in one-letter code: Large ribosomal subunit protein uL10 (176 aa).

The protein belongs to the universal ribosomal protein uL10 family. As to quaternary structure, part of the ribosomal stalk of the 50S ribosomal subunit. The N-terminus interacts with L11 and the large rRNA to form the base of the stalk. The C-terminus forms an elongated spine to which L12 dimers bind in a sequential fashion forming a multimeric L10(L12)X complex.

Functionally, forms part of the ribosomal stalk, playing a central role in the interaction of the ribosome with GTP-bound translation factors. The chain is Large ribosomal subunit protein uL10 from Mycobacteroides abscessus (strain ATCC 19977 / DSM 44196 / CCUG 20993 / CIP 104536 / JCM 13569 / NCTC 13031 / TMC 1543 / L948) (Mycobacterium abscessus).